A 234-amino-acid polypeptide reads, in one-letter code: Glycerol-3-phosphate acyltransferase (234 aa).

6 consecutive transmembrane segments (helical) span residues leucine 4–glycine 24, threonine 56–phenylalanine 76, valine 90–alanine 110, alanine 122–leucine 142, valine 152–phenylalanine 172, and phenylalanine 191–isoleucine 211.

This sequence belongs to the PlsY family. As to quaternary structure, probably interacts with PlsX.

Its subcellular location is the cell inner membrane. The catalysed reaction is an acyl phosphate + sn-glycerol 3-phosphate = a 1-acyl-sn-glycero-3-phosphate + phosphate. It participates in lipid metabolism; phospholipid metabolism. In terms of biological role, catalyzes the transfer of an acyl group from acyl-phosphate (acyl-PO(4)) to glycerol-3-phosphate (G3P) to form lysophosphatidic acid (LPA). This enzyme utilizes acyl-phosphate as fatty acyl donor, but not acyl-CoA or acyl-ACP. This chain is Glycerol-3-phosphate acyltransferase, found in Chlorobium chlorochromatii (strain CaD3).